The chain runs to 360 residues: Methylthioribose-1-phosphate isomerase (360 aa).

Catalysis depends on aspartate 246, which acts as the Proton donor.

It belongs to the eIF-2B alpha/beta/delta subunits family. MtnA subfamily.

The protein resides in the cytoplasm. The protein localises to the nucleus. It carries out the reaction 5-(methylsulfanyl)-alpha-D-ribose 1-phosphate = 5-(methylsulfanyl)-D-ribulose 1-phosphate. Its pathway is amino-acid biosynthesis; L-methionine biosynthesis via salvage pathway; L-methionine from S-methyl-5-thio-alpha-D-ribose 1-phosphate: step 1/6. Functionally, catalyzes the interconversion of methylthioribose-1-phosphate (MTR-1-P) into methylthioribulose-1-phosphate (MTRu-1-P). This is Methylthioribose-1-phosphate isomerase from Aedes aegypti (Yellowfever mosquito).